A 523-amino-acid chain; its full sequence is Mediator of RNA polymerase II transcription subunit 1.2 (523 aa).

The protein belongs to the Mediator complex subunit 1 family. Component of the Mediator complex.

Its subcellular location is the nucleus. Functionally, component of the Mediator complex, a coactivator involved in the regulated transcription of nearly all RNA polymerase II-dependent genes. Mediator functions as a bridge to convey information from gene-specific regulatory proteins to the basal RNA polymerase II transcription machinery. Mediator is recruited to promoters by direct interactions with regulatory proteins and serves as a scaffold for the assembly of a functional preinitiation complex with RNA polymerase II and the general transcription factors. This chain is Mediator of RNA polymerase II transcription subunit 1.2 (mdt-1.2), found in Caenorhabditis briggsae.